The following is a 257-amino-acid chain: Imidazole glycerol phosphate synthase subunit HisF (257 aa).

Active-site residues include Asp12 and Asp131.

The protein belongs to the HisA/HisF family. As to quaternary structure, heterodimer of HisH and HisF.

It localises to the cytoplasm. The enzyme catalyses 5-[(5-phospho-1-deoxy-D-ribulos-1-ylimino)methylamino]-1-(5-phospho-beta-D-ribosyl)imidazole-4-carboxamide + L-glutamine = D-erythro-1-(imidazol-4-yl)glycerol 3-phosphate + 5-amino-1-(5-phospho-beta-D-ribosyl)imidazole-4-carboxamide + L-glutamate + H(+). The protein operates within amino-acid biosynthesis; L-histidine biosynthesis; L-histidine from 5-phospho-alpha-D-ribose 1-diphosphate: step 5/9. Its function is as follows. IGPS catalyzes the conversion of PRFAR and glutamine to IGP, AICAR and glutamate. The HisF subunit catalyzes the cyclization activity that produces IGP and AICAR from PRFAR using the ammonia provided by the HisH subunit. This is Imidazole glycerol phosphate synthase subunit HisF from Burkholderia ambifaria (strain MC40-6).